The primary structure comprises 214 residues: MNSQNSQIQPQARYILPSFIEHSSFGVKESNPYNKLFEERIIFLGVQVDDASANDIMAQLLVLESLDPDRDITMYINSPGGGFTSLMAIYDTMQYVRADIQTVCLGQAASAAAVLLAAGTPGKRMALPNARVLIHQPSLSGVIQGQFSDLEIQAAEIERMRTLMETTLARHTGKDAGVIRKDTDRDKILTAEEAKDYGIIDTVLEYRKLSAQTA.

Residue serine 110 is the Nucleophile of the active site. The active site involves histidine 135.

Belongs to the peptidase S14 family. As to quaternary structure, fourteen ClpP subunits assemble into 2 heptameric rings which stack back to back to give a disk-like structure with a central cavity, resembling the structure of eukaryotic proteasomes.

It localises to the cytoplasm. The enzyme catalyses Hydrolysis of proteins to small peptides in the presence of ATP and magnesium. alpha-casein is the usual test substrate. In the absence of ATP, only oligopeptides shorter than five residues are hydrolyzed (such as succinyl-Leu-Tyr-|-NHMec, and Leu-Tyr-Leu-|-Tyr-Trp, in which cleavage of the -Tyr-|-Leu- and -Tyr-|-Trp bonds also occurs).. Its function is as follows. Cleaves peptides in various proteins in a process that requires ATP hydrolysis. Has a chymotrypsin-like activity. Plays a major role in the degradation of misfolded proteins. The protein is ATP-dependent Clp protease proteolytic subunit 2 of Mycobacterium bovis (strain ATCC BAA-935 / AF2122/97).